Here is a 483-residue protein sequence, read N- to C-terminus: Probable L-xylulose kinase (483 aa).

This sequence belongs to the FGGY kinase family. As to quaternary structure, homodimer.

It catalyses the reaction L-xylulose + ATP = L-xylulose 5-phosphate + ADP + H(+). The sequence is that of Probable L-xylulose kinase (lyx) from Pasteurella multocida (strain Pm70).